The chain runs to 126 residues: uncharacterized protein (126 aa).

This is an uncharacterized protein from Rickettsia prowazekii (strain Madrid E).